The sequence spans 639 residues: MSTIRLTTAQALVKFLNNQYVEFDGKQQRFVKGIFTIFGHGNVLGLGQALEEDPGELEVYQGRNEQGMANAAIAFAKQKNRKQIMAATSSVGPGAANMVTSAATATANNIPVLLLPGDVFATRQPDPVLQQIEHTHDLSISTNDAFRAVSKYWDRVCRPEQLMSAMLNAMRVLTNPADTGAVTIALPQDVQGEAWDFPESFFAKRVHRIERRQPSLESVRDAVKLIRSKKKPLLVLGGGVRYSEAADAFVKFAEKFNIPFAETQAGKGTIESSHPLNLGGIGVTGNLAANTIAKQADLIIGVGTRFTDFTTASKQLFSSAEILTINVSEFHASKLDAVKVVADAKAGLEAIAEALGDYVSAYGNEISEAKQAWNRELERLCSVAYGENFTPEIAGHLDEKLPEYREAFGSELTQTGVIGKVNELIDDDAVIVGASGSLPGDLQRMWVCKDRNTYHMEYGYSCMGYEIAGAFGVKLAEPDKEVYAMVGDGSFLMLHSELVTSLQEGQKINIILFDNSGFGCINNLQMENGMGSFVTEFRKRNLETGQLDGPIMTIDYAKVAEGYGLKTYSVRTMEELETALIDSKKQSISTLIDIKVLPKTMTHGYGSWWHVGVAEVSTKESVQAAYRNKQENLKLARKY.

Glutamate 65 is a binding site for thiamine diphosphate. Residues 437–517 are thiamine pyrophosphate binding; that stretch reads SLPGDLQRMW…INIILFDNSG (81 aa). Aspartate 488 and asparagine 515 together coordinate Mg(2+).

This sequence belongs to the TPP enzyme family. The cofactor is Mg(2+). Thiamine diphosphate is required as a cofactor.

It carries out the reaction 3D-3,5/4-trihydroxycyclohexane-1,2-dione + H2O = 5-deoxy-D-glucuronate + H(+). It functions in the pathway polyol metabolism; myo-inositol degradation into acetyl-CoA; acetyl-CoA from myo-inositol: step 3/7. Involved in the cleavage of the C1-C2 bond of 3D-(3,5/4)-trihydroxycyclohexane-1,2-dione (THcHDO) to yield 5-deoxy-glucuronate (5DG). This chain is 3D-(3,5/4)-trihydroxycyclohexane-1,2-dione hydrolase, found in Geobacillus thermodenitrificans (strain NG80-2).